The sequence spans 206 residues: Large ribosomal subunit protein bL25 (206 aa).

It belongs to the bacterial ribosomal protein bL25 family. CTC subfamily. As to quaternary structure, part of the 50S ribosomal subunit; part of the 5S rRNA/L5/L18/L25 subcomplex. Contacts the 5S rRNA. Binds to the 5S rRNA independently of L5 and L18.

In terms of biological role, this is one of the proteins that binds to the 5S RNA in the ribosome where it forms part of the central protuberance. The polypeptide is Large ribosomal subunit protein bL25 (Bartonella henselae (strain ATCC 49882 / DSM 28221 / CCUG 30454 / Houston 1) (Rochalimaea henselae)).